The sequence spans 134 residues: L-ectoine synthase (134 aa).

It belongs to the ectoine synthase family.

It carries out the reaction (2S)-4-acetamido-2-aminobutanoate = L-ectoine + H2O. It participates in amine and polyamine biosynthesis; ectoine biosynthesis; L-ectoine from L-aspartate 4-semialdehyde: step 3/3. Catalyzes the circularization of gamma-N-acetyl-alpha,gamma-diaminobutyric acid (ADABA) to ectoine (1,4,5,6-tetrahydro-2-methyl-4-pyrimidine carboxylic acid), which is an excellent osmoprotectant. The polypeptide is L-ectoine synthase (ectC) (Sporosarcina pasteurii (Bacillus pasteurii)).